The following is a 120-amino-acid chain: NAD(P)H-quinone oxidoreductase subunit 3, chloroplastic (120 aa).

The next 3 membrane-spanning stretches (helical) occupy residues 9–29 (IFWA…LISG), 64–84 (MFAL…PWAM), and 88–108 (VLGV…ILGL).

The protein belongs to the complex I subunit 3 family. As to quaternary structure, NDH is composed of at least 16 different subunits, 5 of which are encoded in the nucleus.

Its subcellular location is the plastid. It is found in the chloroplast thylakoid membrane. It catalyses the reaction a plastoquinone + NADH + (n+1) H(+)(in) = a plastoquinol + NAD(+) + n H(+)(out). The catalysed reaction is a plastoquinone + NADPH + (n+1) H(+)(in) = a plastoquinol + NADP(+) + n H(+)(out). In terms of biological role, NDH shuttles electrons from NAD(P)H:plastoquinone, via FMN and iron-sulfur (Fe-S) centers, to quinones in the photosynthetic chain and possibly in a chloroplast respiratory chain. The immediate electron acceptor for the enzyme in this species is believed to be plastoquinone. Couples the redox reaction to proton translocation, and thus conserves the redox energy in a proton gradient. The chain is NAD(P)H-quinone oxidoreductase subunit 3, chloroplastic from Capsella bursa-pastoris (Shepherd's purse).